A 556-amino-acid polypeptide reads, in one-letter code: Formate--tetrahydrofolate ligase (556 aa).

65–72 provides a ligand contact to ATP; that stretch reads TPAGEGKS.

It belongs to the formate--tetrahydrofolate ligase family.

It carries out the reaction (6S)-5,6,7,8-tetrahydrofolate + formate + ATP = (6R)-10-formyltetrahydrofolate + ADP + phosphate. It participates in one-carbon metabolism; tetrahydrofolate interconversion. The chain is Formate--tetrahydrofolate ligase from Clostridium botulinum (strain Alaska E43 / Type E3).